A 182-amino-acid chain; its full sequence is CDP-diacylglycerol--glycerol-3-phosphate 3-phosphatidyltransferase (182 aa).

Residues 1–12 lie on the Cytoplasmic side of the membrane; that stretch reads MQLNIPTWLTLF. The chain crosses the membrane as a helical span at residues 13–37; sequence RVVMIPFFVLAFYLPFKWAPLCCAL. Residues 38-60 are Periplasmic-facing; that stretch reads IFVLAAVTDWFDGFLARRWKQTT. The chain crosses the membrane as a helical span at residues 61-81; sequence RFGAFLDPVADKVMVAMALVL. The Cytoplasmic segment spans residues 82–86; that stretch reads VAEHF. The chain crosses the membrane as a helical span at residues 87 to 107; sequence HSWWITLPAATMIAREIIISA. The Periplasmic segment spans residues 108–145; the sequence is LREWMAEIGKRSSVAVSWIGKVKTTAQMLALVTLLWRP. Residues 146-168 traverse the membrane as a helical segment; that stretch reads DDIVSGIGIAALYVAAVLTFWSM. Residues 169-181 lie on the Cytoplasmic side of the membrane; it reads FQYLYAARHDLFE.

This sequence belongs to the CDP-alcohol phosphatidyltransferase class-I family.

Its subcellular location is the cell inner membrane. The enzyme catalyses a CDP-1,2-diacyl-sn-glycerol + sn-glycerol 3-phosphate = a 1,2-diacyl-sn-glycero-3-phospho-(1'-sn-glycero-3'-phosphate) + CMP + H(+). It participates in phospholipid metabolism; phosphatidylglycerol biosynthesis; phosphatidylglycerol from CDP-diacylglycerol: step 1/2. Functionally, catalyzes the conversion of cytidine diphosphate diacylglycerol (CDP-DG) and glycerol 3-phosphate into phosphatidylglycerol. Essential for the synthesis of anionic phospholipids, thereby playing a role in balancing the ratio of zwitterionic and anionic phospholipids, which is thought to be important for normal membrane function. The sequence is that of CDP-diacylglycerol--glycerol-3-phosphate 3-phosphatidyltransferase from Sodalis glossinidius (strain morsitans).